The following is a 64-amino-acid chain: Large ribosomal subunit protein bL35 (64 aa).

Belongs to the bacterial ribosomal protein bL35 family.

This chain is Large ribosomal subunit protein bL35, found in Acinetobacter baumannii (strain AB307-0294).